A 308-amino-acid chain; its full sequence is Very-long-chain enoyl-CoA reductase (308 aa).

The Cytoplasmic portion of the chain corresponds to 1–86 (MKHYEVEILD…YFRDLGAQIS (86 aa)). Lys-22 carries the N6-acetyllysine modification. Position 58 is a phosphoserine (Ser-58). Residue Lys-60 is modified to N6-acetyllysine. A helical transmembrane segment spans residues 87-106 (WVTVFLTEYAGPLFIYLLFY). The Lumenal portion of the chain corresponds to 107-124 (FRVPFIYGRKYDFTSSRH). Residues 125-147 (TVVHLACICHSFHYIKRLLETLF) form a helical membrane-spanning segment. The Cytoplasmic portion of the chain corresponds to 148-158 (VHRFSHGTMPL). Residues 159-180 (RNIFKNCTYYWGFAAWMAYYIN) traverse the membrane as a helical segment. The Lumenal segment spans residues 181–189 (HPLYTPPTY). Residues 190-216 (GAQQVKLALAIFVICQLGNFSIHMALR) traverse the membrane as a helical segment. Topologically, residues 217–245 (DLRPAGSKTRKIPYPTRNPFTWLFLLVSC) are cytoplasmic. Residues 246–262 (PNYTYEVGSWIGFAIMT) form a helical membrane-spanning segment. Residues 263-264 (QC) are Lumenal-facing. Residues 265–292 (LPVALFSLVGFTQMTIWAKGKHRSYLKE) traverse the membrane as a helical segment. The Cytoplasmic segment spans residues 293–308 (FRDYPPLRMPIIPFLL).

Belongs to the steroid 5-alpha reductase family. Interacts with ELOVL1 and LASS2. Post-translationally, glycosylated.

It is found in the endoplasmic reticulum membrane. It catalyses the reaction a very-long-chain 2,3-saturated fatty acyl-CoA + NADP(+) = a very-long-chain (2E)-enoyl-CoA + NADPH + H(+). It carries out the reaction octadecanoyl-CoA + NADP(+) = (2E)-octadecenoyl-CoA + NADPH + H(+). The catalysed reaction is (2E,7Z,10Z,13Z,16Z)-docosapentaenoyl-CoA + NADPH + H(+) = (7Z,10Z,13Z,16Z)-docosatetraenoyl-CoA + NADP(+). The enzyme catalyses (2E,7Z,10Z,13Z,16Z,19Z)-docosahexaenoyl-CoA + NADPH + H(+) = (7Z,10Z,13Z,16Z,19Z)-docosapentaenoyl-CoA + NADP(+). It catalyses the reaction (2E,8Z,11Z,14Z)-eicosatetraenoyl-CoA + NADPH + H(+) = (8Z,11Z,14Z)-eicosatrienoyl-CoA + NADP(+). It carries out the reaction (2E)-hexadecenoyl-CoA + NADPH + H(+) = hexadecanoyl-CoA + NADP(+). Its pathway is lipid metabolism; fatty acid biosynthesis. It functions in the pathway lipid metabolism; sphingolipid metabolism. Involved in both the production of very long-chain fatty acids for sphingolipid synthesis and the degradation of the sphingosine moiety in sphingolipids through the sphingosine 1-phosphate metabolic pathway. Catalyzes the last of the four reactions of the long-chain fatty acids elongation cycle. This endoplasmic reticulum-bound enzymatic process, allows the addition of 2 carbons to the chain of long- and very long-chain fatty acids/VLCFAs per cycle. This enzyme reduces the trans-2,3-enoyl-CoA fatty acid intermediate to an acyl-CoA that can be further elongated by entering a new cycle of elongation. Thereby, it participates in the production of VLCFAs of different chain lengths that are involved in multiple biological processes as precursors of membrane lipids and lipid mediators. Catalyzes the saturation step of the sphingosine 1-phosphate metabolic pathway, the conversion of trans-2-hexadecenoyl-CoA to palmitoyl-CoA. The polypeptide is Very-long-chain enoyl-CoA reductase (TECR) (Bos taurus (Bovine)).